The primary structure comprises 62 residues: UPF0337 protein XCC0070 (62 aa).

Positions 32–62 (LEGAAEKNIGKVQRKAGELADDVRDATKSTR) are disordered.

It belongs to the UPF0337 (CsbD) family.

This is UPF0337 protein XCC0070 from Xanthomonas campestris pv. campestris (strain ATCC 33913 / DSM 3586 / NCPPB 528 / LMG 568 / P 25).